We begin with the raw amino-acid sequence, 109 residues long: Spermidine export protein MdtI (109 aa).

Over 1-5 (MAQFE) the chain is Periplasmic. The helical transmembrane segment at 6-26 (WVHAAWLALAIVLEIVANVFL) threads the bilayer. Residues 27-35 (KFSDGFRRK) are Cytoplasmic-facing. Residues 36 to 56 (IFGLLSLAAVLAAFSALSQAV) traverse the membrane as a helical segment. Topologically, residues 57–63 (KGIDLSV) are periplasmic. A helical membrane pass occupies residues 64-84 (VYALWGGFGIAATLAAGWILF). Residues 85 to 87 (GQR) lie on the Cytoplasmic side of the membrane. A helical transmembrane segment spans residues 88-108 (LNRKGWIGLVLLLAGMIMVKL). Alanine 109 is a topological domain (periplasmic).

The protein belongs to the drug/metabolite transporter (DMT) superfamily. Small multidrug resistance (SMR) (TC 2.A.7.1) family. MdtI subfamily. Forms a complex with MdtJ.

It is found in the cell inner membrane. Catalyzes the excretion of spermidine. The polypeptide is Spermidine export protein MdtI (mdtI) (Shigella flexneri).